Reading from the N-terminus, the 464-residue chain is Mitogen-activated protein kinase 10 (464 aa).

The 296-residue stretch at 64–359 folds into the Protein kinase domain; the sequence is YQNLKPIGSG…VDDALQHPYI (296 aa). Residues 70 to 78 and K93 each bind ATP; that span reads IGSGAQGIV. The active-site Proton acceptor is the D189. T221 is subject to Phosphothreonine; by MAP2K7. Residues 221-223 carry the TXY motif; that stretch reads TPY. Y223 bears the Phosphotyrosine; by MAP2K4 mark. A disordered region spans residues 405-464; that stretch reads TKNGVVKSQPSPSGAAVNSSESLPPSSAVNDISSMSTDQTLASDTDSSLEASAGPLGCCR. A compositionally biased stretch (polar residues) spans 410-454; the sequence is VKSQPSPSGAAVNSSESLPPSSAVNDISSMSTDQTLASDTDSSLE. S-palmitoyl cysteine attachment occurs at residues C462 and C463.

Belongs to the protein kinase superfamily. CMGC Ser/Thr protein kinase family. MAP kinase subfamily. In terms of assembly, interacts with MAPK8IP1/JIP-1, MAPK8IP3/JIP-3/JSAP1 and SPAG9/MAPK8IP4/JIP4. Interacts with HDAC9 and MAPKBP1. Interacts with ARRB2; the interaction enhances MAPK10 activation by MAP3K5. Interacts with SARM1. Interacts with JUND; interaction is inhibited in the presence of MEN1. Mg(2+) is required as a cofactor. In terms of processing, dually phosphorylated on Thr-221 and Tyr-223 by MAP2K4 and MAP2K7, which activates the enzyme. MAP2K7 shows a strong preference for Thr-221 while MAP2K4 phosphorylates Tyr-223 preferentially. Weakly autophosphorylated on threonine and tyrosine residues in vitro. Post-translationally, palmitoylation regulates subcellular location and axonal development. In terms of tissue distribution, brain (at protein level). Expressed specifically in neurons of the hippocampus, cortex, cerebellum, brainstem, and spinal cord. Seems to be also found in testis, and very weakly in the heart.

The protein localises to the cytoplasm. Its subcellular location is the membrane. It localises to the nucleus. It is found in the mitochondrion. It carries out the reaction L-seryl-[protein] + ATP = O-phospho-L-seryl-[protein] + ADP + H(+). The catalysed reaction is L-threonyl-[protein] + ATP = O-phospho-L-threonyl-[protein] + ADP + H(+). Activated by threonine and tyrosine phosphorylation by two dual specificity kinases, MAP2K4 and MAP2K7. MAP2K7 phosphorylates MAPK10 on Thr-221 causing a conformational change and a large increase in Vmax for the enzyme. MAP2K4 then phosphorylates Tyr-223 resulting in a further increase in Vmax. Inhibited by dual specificity phosphatases, such as DUSP1. Inhibited by HDAC9. In terms of biological role, serine/threonine-protein kinase involved in various processes such as neuronal proliferation, differentiation, migration and programmed cell death. Extracellular stimuli such as pro-inflammatory cytokines or physical stress stimulate the stress-activated protein kinase/c-Jun N-terminal kinase (SAP/JNK) signaling pathway. In this cascade, two dual specificity kinases MAP2K4/MKK4 and MAP2K7/MKK7 phosphorylate and activate MAPK10/JNK3. In turn, MAPK10/JNK3 phosphorylates a number of transcription factors, primarily components of AP-1 such as JUN and ATF2 and thus regulates AP-1 transcriptional activity. Plays regulatory roles in the signaling pathways during neuronal apoptosis. Phosphorylates the neuronal microtubule regulator STMN2. Acts in the regulation of the amyloid-beta precursor protein/APP signaling during neuronal differentiation by phosphorylating APP. Also participates in neurite growth in spiral ganglion neurons. Phosphorylates the CLOCK-BMAL1 heterodimer and plays a role in the photic regulation of the circadian clock. Phosphorylates JUND and this phosphorylation is inhibited in the presence of MEN1. In Mus musculus (Mouse), this protein is Mitogen-activated protein kinase 10 (Mapk10).